A 361-amino-acid polypeptide reads, in one-letter code: Rho-GTPase-activating protein 5 (361 aa).

A Rho-GAP domain is found at Ile-52 to Ile-245. Low complexity predominate over residues Ser-306–Ser-323. The segment at Ser-306–Ser-345 is disordered.

It localises to the membrane. Functionally, GTPase-activating protein for Rho1. Has a role in the negative regulation of (1-3)beta-D-glucan synthase activity and cell integrity. The polypeptide is Rho-GTPase-activating protein 5 (rga5) (Schizosaccharomyces pombe (strain 972 / ATCC 24843) (Fission yeast)).